Consider the following 272-residue polypeptide: U11/U12 small nuclear ribonucleoprotein 35 kDa protein (272 aa).

The 79-residue stretch at 51 to 129 (LTLFVSRLSP…REVFVDFELE (79 aa)) folds into the RRM domain. Basic and acidic residues-rich tracts occupy residues 146-162 (GKKE…DRPF) and 190-272 (RDRS…EHNR). The tract at residues 146–272 (GKKESGQLRF…RKHRSDEHNR (127 aa)) is disordered. The stretch at 221 to 258 (TKDDKEQNAEHTKRERSREQAKNDKDKEKKDSKRERSR) forms a coiled coil.

It is found in the nucleus. This Xenopus laevis (African clawed frog) protein is U11/U12 small nuclear ribonucleoprotein 35 kDa protein (snrnp35).